The following is a 417-amino-acid chain: Serine hydroxymethyltransferase 2 (417 aa).

(6S)-5,6,7,8-tetrahydrofolate contacts are provided by residues L121 and G125–L127. N6-(pyridoxal phosphate)lysine is present on K229. S354–F356 lines the (6S)-5,6,7,8-tetrahydrofolate pocket.

This sequence belongs to the SHMT family. In terms of assembly, homodimer. The cofactor is pyridoxal 5'-phosphate.

The protein resides in the cytoplasm. It catalyses the reaction (6R)-5,10-methylene-5,6,7,8-tetrahydrofolate + glycine + H2O = (6S)-5,6,7,8-tetrahydrofolate + L-serine. It functions in the pathway one-carbon metabolism; tetrahydrofolate interconversion. The protein operates within amino-acid biosynthesis; glycine biosynthesis; glycine from L-serine: step 1/1. Its function is as follows. Catalyzes the reversible interconversion of serine and glycine with tetrahydrofolate (THF) serving as the one-carbon carrier. This reaction serves as the major source of one-carbon groups required for the biosynthesis of purines, thymidylate, methionine, and other important biomolecules. Also exhibits THF-independent aldolase activity toward beta-hydroxyamino acids, producing glycine and aldehydes, via a retro-aldol mechanism. The chain is Serine hydroxymethyltransferase 2 from Pseudomonas fluorescens (strain Pf0-1).